Consider the following 396-residue polypeptide: uncharacterized protein (396 aa).

Belongs to the mycobacterial PPE family.

This is an uncharacterized protein from Mycobacterium tuberculosis (strain ATCC 25618 / H37Rv).